Reading from the N-terminus, the 1957-residue chain is Chromatin modification-related protein EAF1 A (1957 aa).

Disordered stretches follow at residues 108-208, 261-287, 323-373, and 449-469; these read ASPH…TDLV, NRVS…GSKT, GGSP…SHAN, and NQSH…ETEK. Basic and acidic residues predominate over residues 140-151; it reads SENKSVEGERNL. Polar residues-rich tracts occupy residues 261-270, 333-342, and 355-372; these read NRVSSNSLNT, GQKNSSTQLN, and TNRG…SSHA. The HSA domain maps to 563 to 641; that stretch reads CGTAPVEVRE…LSNAILQFWS (79 aa). Disordered stretches follow at residues 833–909 and 928–950; these read GSNS…AVQK and AETS…DQTW. Residues 884-898 are compositionally biased toward polar residues; it reads TDASSGDTSSFQDEY. In terms of domain architecture, SANT spans 1049-1105; sequence SGNPWSLFEDQALVVLVHDMGPNWELISDAMNSTLKIKCIYRNPTECKDRHKILMDK. Disordered stretches follow at residues 1107-1131, 1282-1314, 1344-1367, 1449-1644, 1687-1768, 1804-1840, and 1876-1957; these read AGDG…PGIP, TPVL…GLQS, LSGR…DRGH, QGNS…QQLN, PVRP…IAPA, ELSK…PQAS, and SSNT…TKVE. Composition is skewed to polar residues over residues 1116-1125, 1290-1314, 1344-1358, 1459-1472, 1479-1492, and 1501-1510; these read DSGNSQSYPS, AHPS…GLQS, LSGR…STPA, SNLS…TTPV, LSQQ…SHVL, and QSPSQATGAQ. Low complexity-rich tracts occupy residues 1523–1534 and 1545–1562; these read QRYLQQQQQQQQ and VQQP…NSPQ. The segment covering 1563–1579 has biased composition (pro residues); sequence TQPPVSPQPLSMPPVSP. Composition is skewed to polar residues over residues 1582–1595, 1604–1618, 1635–1644, 1691–1722, and 1734–1758; these read NINA…QKSQ, SPQS…QAGK, RQPTQGQQLN, DQQS…QQLP, and QQQM…CNIL. A compositionally biased stretch (low complexity) spans 1759 to 1768; it reads STSSPSIAPA. The span at 1805 to 1815 shows a compositional bias: basic and acidic residues; that stretch reads LSKKSQAERMP. Polar residues-rich tracts occupy residues 1819 to 1832 and 1876 to 1894; these read QSVT…SMGT and SSNT…NQGL. 2 stretches are compositionally biased toward basic and acidic residues: residues 1913 to 1922 and 1932 to 1942; these read SEEKRPKLPE and LASEEQPHLEE.

This sequence belongs to the EAF1 family. In terms of assembly, component of the NuA4 histone acetyltransferase complex. Interacts with ARP4 and SWC4, and (via HSA domain) with TAF14 and TAF14B. In terms of tissue distribution, expressed in leaves.

It localises to the nucleus. In terms of biological role, component of the NuA4 histone acetyltransferase complex which is involved in transcriptional activation of selected genes principally by acetylation of nucleosomal histone H4 and H2A. This is Chromatin modification-related protein EAF1 A (EAF1A) from Arabidopsis thaliana (Mouse-ear cress).